Here is a 309-residue protein sequence, read N- to C-terminus: D-alanine--D-alanine ligase (309 aa).

Residues 104–301 form the ATP-grasp domain; the sequence is KQIWQGSDLP…FDALCVEILA (198 aa). 130-185 is an ATP binding site; the sequence is VASLGLPVIIKPVHEGSSIGMSKVEKIEDFAPAIEKATAHDAIVMAEKWITGREYT. Mg(2+)-binding residues include Asp255, Glu268, and Asn270.

This sequence belongs to the D-alanine--D-alanine ligase family. Requires Mg(2+) as cofactor. It depends on Mn(2+) as a cofactor.

The protein resides in the cytoplasm. It carries out the reaction 2 D-alanine + ATP = D-alanyl-D-alanine + ADP + phosphate + H(+). It participates in cell wall biogenesis; peptidoglycan biosynthesis. Cell wall formation. The protein is D-alanine--D-alanine ligase of Acinetobacter baylyi (strain ATCC 33305 / BD413 / ADP1).